The chain runs to 459 residues: NADH oxidase (459 aa).

Residue N10 participates in FAD binding. The Proton acceptor role is filled by H11. 9 residues coordinate FAD: A12, D34, Q35, C44, V81, A110, S113, K143, and Y172. Residue C44 is the Redox-active of the active site. C44 bears the Cysteine sulfinic acid (-SO2H) mark. The NAD(+) site is built by I173, D192, Y201, and G256. D294 is an FAD binding site. A310 lines the NAD(+) pocket. Residues L311, A312, and S313 each contribute to the FAD site. NAD(+) is bound at residue G341. F439 contacts FAD.

Belongs to the class-III pyridine nucleotide-disulfide oxidoreductase family. FAD serves as cofactor.

Its subcellular location is the secreted. The protein localises to the cell wall. The enzyme catalyses 2 NADH + O2 + 2 H(+) = 2 NAD(+) + 2 H2O. In terms of biological role, catalyzes the four-electron reduction of molecular oxygen to water. Plays a role in redox balance maintenance. May be involved in mediating bacterial adhesion to host cells. May be considered a potential virulence factor. This chain is NADH oxidase, found in Streptococcus pneumoniae serotype 4 (strain ATCC BAA-334 / TIGR4).